A 479-amino-acid polypeptide reads, in one-letter code: UDP-N-acetylmuramoylalanine--D-glutamate ligase (479 aa).

110–116 is a binding site for ATP; sequence GTNGKTS.

This sequence belongs to the MurCDEF family.

It is found in the cytoplasm. It catalyses the reaction UDP-N-acetyl-alpha-D-muramoyl-L-alanine + D-glutamate + ATP = UDP-N-acetyl-alpha-D-muramoyl-L-alanyl-D-glutamate + ADP + phosphate + H(+). It participates in cell wall biogenesis; peptidoglycan biosynthesis. Cell wall formation. Catalyzes the addition of glutamate to the nucleotide precursor UDP-N-acetylmuramoyl-L-alanine (UMA). In Bifidobacterium adolescentis (strain ATCC 15703 / DSM 20083 / NCTC 11814 / E194a), this protein is UDP-N-acetylmuramoylalanine--D-glutamate ligase.